Consider the following 349-residue polypeptide: Phosphoribosylformylglycinamidine cyclo-ligase (349 aa).

The protein belongs to the AIR synthase family.

It is found in the cytoplasm. The catalysed reaction is 2-formamido-N(1)-(5-O-phospho-beta-D-ribosyl)acetamidine + ATP = 5-amino-1-(5-phospho-beta-D-ribosyl)imidazole + ADP + phosphate + H(+). The protein operates within purine metabolism; IMP biosynthesis via de novo pathway; 5-amino-1-(5-phospho-D-ribosyl)imidazole from N(2)-formyl-N(1)-(5-phospho-D-ribosyl)glycinamide: step 2/2. The protein is Phosphoribosylformylglycinamidine cyclo-ligase of Listeria monocytogenes serotype 4a (strain HCC23).